We begin with the raw amino-acid sequence, 549 residues long: CTP synthase (549 aa).

The segment at 1–272 (MPPKSTTTKH…DAYVVRKLDL (272 aa)) is amidoligase domain. Ser19 is a CTP binding site. Ser19 lines the UTP pocket. ATP is bound by residues 20–25 (SLGKGL) and Asp77. Mg(2+) contacts are provided by Asp77 and Glu146. CTP is bound by residues 153–155 (DIE), 193–198 (KTKPTQ), and Lys229. UTP is bound by residues 193 to 198 (KTKPTQ) and Lys229. Residues 297–548 (NLALVGKYID…VKAAVERKTG (252 aa)) enclose the Glutamine amidotransferase type-1 domain. Gly360 is an L-glutamine binding site. Cys387 acts as the Nucleophile; for glutamine hydrolysis in catalysis. L-glutamine is bound by residues 388-391 (LGLQ), Glu411, and Arg473. Catalysis depends on residues His521 and Glu523.

The protein belongs to the CTP synthase family. As to quaternary structure, homotetramer.

The enzyme catalyses UTP + L-glutamine + ATP + H2O = CTP + L-glutamate + ADP + phosphate + 2 H(+). The catalysed reaction is L-glutamine + H2O = L-glutamate + NH4(+). It catalyses the reaction UTP + NH4(+) + ATP = CTP + ADP + phosphate + 2 H(+). It functions in the pathway pyrimidine metabolism; CTP biosynthesis via de novo pathway; CTP from UDP: step 2/2. Its activity is regulated as follows. Allosterically activated by GTP, when glutamine is the substrate; GTP has no effect on the reaction when ammonia is the substrate. The allosteric effector GTP functions by stabilizing the protein conformation that binds the tetrahedral intermediate(s) formed during glutamine hydrolysis. Inhibited by the product CTP, via allosteric rather than competitive inhibition. In terms of biological role, catalyzes the ATP-dependent amination of UTP to CTP with either L-glutamine or ammonia as the source of nitrogen. Regulates intracellular CTP levels through interactions with the four ribonucleotide triphosphates. The polypeptide is CTP synthase (Streptomyces avermitilis (strain ATCC 31267 / DSM 46492 / JCM 5070 / NBRC 14893 / NCIMB 12804 / NRRL 8165 / MA-4680)).